Consider the following 166-residue polypeptide: Large ribosomal subunit protein uL10 (166 aa).

It belongs to the universal ribosomal protein uL10 family. As to quaternary structure, part of the ribosomal stalk of the 50S ribosomal subunit. The N-terminus interacts with L11 and the large rRNA to form the base of the stalk. The C-terminus forms an elongated spine to which L12 dimers bind in a sequential fashion forming a multimeric L10(L12)X complex.

Its function is as follows. Forms part of the ribosomal stalk, playing a central role in the interaction of the ribosome with GTP-bound translation factors. In Azotobacter vinelandii (strain DJ / ATCC BAA-1303), this protein is Large ribosomal subunit protein uL10.